The primary structure comprises 627 residues: uncharacterized protein (627 aa).

Residues 21–136 enclose the WH1 domain; that stretch reads GISASDKILS…NSVCKRQTRS (116 aa). The interval 310–347 is disordered; it reads RGSLSTPRIPTHRDSYRSATKPDTVPKQTPPPTHNSYV.

This is an uncharacterized protein from Caenorhabditis elegans.